Here is a 509-residue protein sequence, read N- to C-terminus: Maturase K (509 aa).

Belongs to the intron maturase 2 family. MatK subfamily.

It localises to the plastid. Its subcellular location is the chloroplast. Its function is as follows. Usually encoded in the trnK tRNA gene intron. Probably assists in splicing its own and other chloroplast group II introns. This Anthocercis angustifolia (Narrow-leaf ray-flower) protein is Maturase K.